The primary structure comprises 870 residues: Probable disease resistance protein At1g59620 (870 aa).

Residues 123–432 form the NB-ARC domain; it reads DKRNMRQTFS…AAEGMPRPRY (310 aa). Residue 167–174 participates in ATP binding; sequence GMGGIGKT. 6 LRR repeats span residues 543-567, 568-590, 703-726, 735-758, 759-786, and 808-833; these read LQLM…IGLL, IHLR…MQNL, MSGI…IYMP, PWHL…ILEK, LLQL…GFPQ, and MPRL…KFIT.

Belongs to the disease resistance NB-LRR family.

Its function is as follows. Probable disease resistance protein. The protein is Probable disease resistance protein At1g59620 of Arabidopsis thaliana (Mouse-ear cress).